Reading from the N-terminus, the 489-residue chain is N-succinylglutamate 5-semialdehyde dehydrogenase (489 aa).

An NAD(+)-binding site is contributed by 223–228 (GSSNTG). Residues Glu246 and Cys280 contribute to the active site.

This sequence belongs to the aldehyde dehydrogenase family. AstD subfamily.

The enzyme catalyses N-succinyl-L-glutamate 5-semialdehyde + NAD(+) + H2O = N-succinyl-L-glutamate + NADH + 2 H(+). The protein operates within amino-acid degradation; L-arginine degradation via AST pathway; L-glutamate and succinate from L-arginine: step 4/5. Its function is as follows. Catalyzes the NAD-dependent reduction of succinylglutamate semialdehyde into succinylglutamate. The sequence is that of N-succinylglutamate 5-semialdehyde dehydrogenase from Idiomarina loihiensis (strain ATCC BAA-735 / DSM 15497 / L2-TR).